A 501-amino-acid chain; its full sequence is Glutamyl-tRNA(Gln) amidotransferase subunit A (501 aa).

Residues K80 and S155 each act as charge relay system in the active site. Catalysis depends on S179, which acts as the Acyl-ester intermediate.

This sequence belongs to the amidase family. GatA subfamily. Heterotrimer of A, B and C subunits.

It catalyses the reaction L-glutamyl-tRNA(Gln) + L-glutamine + ATP + H2O = L-glutaminyl-tRNA(Gln) + L-glutamate + ADP + phosphate + H(+). Allows the formation of correctly charged Gln-tRNA(Gln) through the transamidation of misacylated Glu-tRNA(Gln) in organisms which lack glutaminyl-tRNA synthetase. The reaction takes place in the presence of glutamine and ATP through an activated gamma-phospho-Glu-tRNA(Gln). This Cupriavidus pinatubonensis (strain JMP 134 / LMG 1197) (Cupriavidus necator (strain JMP 134)) protein is Glutamyl-tRNA(Gln) amidotransferase subunit A.